A 570-amino-acid polypeptide reads, in one-letter code: Periplasmic trehalase (570 aa).

A signal peptide spans 1–34 (MIPPEIRRSVLLQKAIKLALAGTLLTFASFSATA). Residues arginine 159, 166-167 (WD), asparagine 203, 212-214 (RSQ), 284-286 (RPE), and glycine 317 contribute to the substrate site. Residues aspartate 319 and glutamate 503 each act as proton donor/acceptor in the active site. Glutamate 518 contacts substrate. The tract at residues 544-570 (KPCDSVPSTRPASLSATPTKTPSAATQ) is disordered. Low complexity predominate over residues 554-570 (PASLSATPTKTPSAATQ).

The protein belongs to the glycosyl hydrolase 37 family. Monomer.

Its subcellular location is the periplasm. It catalyses the reaction alpha,alpha-trehalose + H2O = alpha-D-glucose + beta-D-glucose. Provides the cells with the ability to utilize trehalose at high osmolarity by splitting it into glucose molecules that can subsequently be taken up by the phosphotransferase-mediated uptake system. This Salmonella paratyphi B (strain ATCC BAA-1250 / SPB7) protein is Periplasmic trehalase.